Consider the following 200-residue polypeptide: MVNYPHKLTSKNNIKKVKKETVDFANRGMTFEKMINDTNDYYLSRGLAVIHKKPTPVQIVKVDYPKRSRAKIVEAYFRQASTTDYSGVYRGHYIDFEAKETRQKQSMPMKNFHAHQIEHMNQVLNQGGICFVLLHFSSLKETYLLPAPYLIEFYKIDKGGKSMPLDYIQKHGYLIEQNILPSVPYLDIISKNLLGGHSNE.

The Mg(2+) site is built by T82, D84, E97, and Q116.

Belongs to the RecU family. It depends on Mg(2+) as a cofactor.

It is found in the cytoplasm. It catalyses the reaction Endonucleolytic cleavage at a junction such as a reciprocal single-stranded crossover between two homologous DNA duplexes (Holliday junction).. Its function is as follows. Endonuclease that resolves Holliday junction intermediates in genetic recombination. Cleaves mobile four-strand junctions by introducing symmetrical nicks in paired strands. Promotes annealing of linear ssDNA with homologous dsDNA. Required for DNA repair, homologous recombination and chromosome segregation. The protein is Holliday junction resolvase RecU of Streptococcus gordonii (strain Challis / ATCC 35105 / BCRC 15272 / CH1 / DL1 / V288).